Here is a 310-residue protein sequence, read N- to C-terminus: Oxygen-dependent coproporphyrinogen-III oxidase (310 aa).

Serine 92 lines the substrate pocket. Residues histidine 96 and histidine 106 each contribute to the a divalent metal cation site. The active-site Proton donor is histidine 106. A substrate-binding site is contributed by 108-110 (NVR). Residues histidine 145 and histidine 175 each contribute to the a divalent metal cation site. Residues 240 to 275 (YVEFNLIWDRGTLFGLQSGGRTESILMSMPPLARWE) are important for dimerization. Substrate is bound at residue 258–260 (GGR).

Belongs to the aerobic coproporphyrinogen-III oxidase family. Homodimer. A divalent metal cation serves as cofactor.

It localises to the cytoplasm. It carries out the reaction coproporphyrinogen III + O2 + 2 H(+) = protoporphyrinogen IX + 2 CO2 + 2 H2O. It functions in the pathway porphyrin-containing compound metabolism; protoporphyrin-IX biosynthesis; protoporphyrinogen-IX from coproporphyrinogen-III (O2 route): step 1/1. Its function is as follows. Involved in the heme biosynthesis. Catalyzes the aerobic oxidative decarboxylation of propionate groups of rings A and B of coproporphyrinogen-III to yield the vinyl groups in protoporphyrinogen-IX. The polypeptide is Oxygen-dependent coproporphyrinogen-III oxidase (Pectobacterium atrosepticum (strain SCRI 1043 / ATCC BAA-672) (Erwinia carotovora subsp. atroseptica)).